Here is a 405-residue protein sequence, read N- to C-terminus: MPEPVAEPALNGLRLNLRIVSIVMFNFASYLTIGLPLAVLPGYVHDVMGFSAFWAGLVISLQYFATLLSRPHAGRYADSLGPKKIVVFGLCGCFLSGLGYLTAGLTASLPVISLLLLCLGRVILGIGQSFAGTGSTLWGVGVVGSLHIGRVISWNGIVTYGAMAMGAPLGVVFYHWGGLQALALIIMGVALVAILLAIPRPTVKASKGKPLPFRAVLGRVWLYGMALALASAGFGVIATFITLFYDAKGWDGAAFALTLFSCAFVGTRLLFPNGINRIGGLNVAMICFSVEIIGLLLVGVATMPWMAKIGVLLAGAGFSLVFPALGVVAVKAVPQQNQGAALATYTVFMDLSLGVTGPLAGLVMSWAGVPVIYLAAAGLVAIALLLTWRLKKRPPEHVPEAASSS.

The Cytoplasmic portion of the chain corresponds to 1 to 18; sequence MPEPVAEPALNGLRLNLR. Residues 19-39 form a helical membrane-spanning segment; the sequence is IVSIVMFNFASYLTIGLPLAV. At 40–46 the chain is on the periplasmic side; sequence LPGYVHD. The helical transmembrane segment at 47–67 threads the bilayer; it reads VMGFSAFWAGLVISLQYFATL. Topologically, residues 68-84 are cytoplasmic; that stretch reads LSRPHAGRYADSLGPKK. The chain crosses the membrane as a helical span at residues 85 to 105; it reads IVVFGLCGCFLSGLGYLTAGL. Residue Thr106 is a topological domain, periplasmic. A helical transmembrane segment spans residues 107 to 127; sequence ASLPVISLLLLCLGRVILGIG. Residues 128 to 155 lie on the Cytoplasmic side of the membrane; the sequence is QSFAGTGSTLWGVGVVGSLHIGRVISWN. The chain crosses the membrane as a helical span at residues 156 to 176; sequence GIVTYGAMAMGAPLGVVFYHW. Position 177 (Gly177) is a topological domain, periplasmic. Residues 178–198 traverse the membrane as a helical segment; sequence GLQALALIIMGVALVAILLAI. The Cytoplasmic segment spans residues 199 to 223; sequence PRPTVKASKGKPLPFRAVLGRVWLY. Residues 224–244 form a helical membrane-spanning segment; the sequence is GMALALASAGFGVIATFITLF. Residues 245 to 251 are Periplasmic-facing; sequence YDAKGWD. Residues 252–272 traverse the membrane as a helical segment; that stretch reads GAAFALTLFSCAFVGTRLLFP. The Cytoplasmic segment spans residues 273–282; that stretch reads NGINRIGGLN. A helical transmembrane segment spans residues 283–303; sequence VAMICFSVEIIGLLLVGVATM. Topologically, residues 304-308 are periplasmic; the sequence is PWMAK. A helical transmembrane segment spans residues 309–329; it reads IGVLLAGAGFSLVFPALGVVA. Topologically, residues 330–343 are cytoplasmic; it reads VKAVPQQNQGAALA. A helical membrane pass occupies residues 344–364; that stretch reads TYTVFMDLSLGVTGPLAGLVM. Position 365 (Ser365) is a topological domain, periplasmic. The chain crosses the membrane as a helical span at residues 366 to 386; sequence WAGVPVIYLAAAGLVAIALLL. At 387 to 405 the chain is on the cytoplasmic side; it reads TWRLKKRPPEHVPEAASSS.

The protein belongs to the major facilitator superfamily. YhhS family.

Its subcellular location is the cell inner membrane. In terms of biological role, confers high-level resistance to glyphosate when overexpressed. Overexpression has no effect on intracellular arabinose concentrations. This is an uncharacterized protein from Escherichia coli (strain K12).